The sequence spans 459 residues: MAP kinase-interacting serine/threonine-protein kinase 2 (459 aa).

The segment at 37–67 (DFSPQCEARPDMPSSQPIDIPDAKKRGRKKK) is disordered. The short motif at 60–66 (KKRGRKK) is the Nuclear localization signal element. Ser-74 is subject to Phosphoserine. Residues 84 to 368 (QLQEDVLGEG…AAQVLQHPWV (285 aa)) form the Protein kinase domain. ATP contacts are provided by residues 90-98 (LGEGAHARV) and Lys-113. Staurosporine is bound at residue 160-162 (EKM). The active-site Proton acceptor is the Asp-205. Glu-209 contacts staurosporine. Thr-244 and Thr-249 each carry phosphothreonine. Zn(2+) is bound by residues Cys-299, Cys-311, and Cys-314. Position 379 is a phosphothreonine (Thr-379). A phosphoserine mark is found at Ser-431 and Ser-434. An MAP kinase binding motif is present at residues 438–442 (LAQRR). Ser-446 carries the phosphoserine modification. Thr-450 bears the Phosphothreonine mark.

It belongs to the protein kinase superfamily. CAMK Ser/Thr protein kinase family. Interacts with ESR2 and EIF4E in the nucleus. Monomer. Interacts with the C-terminal regions of EIF4G1 and EIF4G2; this interaction is promoted when MAPK pathways are repressed but repressed upon ERK proteins activation. Also binds to dephosphorylated MAPK3/ERK1 and MAPK1/ERK2. Interaction with phosphorylated MAPK3/ERK1 and MAPK1/ERK2 protects it from dephosphorylation and inactivation. Requires Mg(2+) as cofactor. It depends on Zn(2+) as a cofactor. Post-translationally, dual phosphorylation of Thr-244 and Thr-249 activates the kinase. Phosphorylation of Thr-379 activates the kinase. Phosphorylated upon arsenic trioxide As(2)O(3) treatment. Phosphorylated by MAPK1/ERK2, MAPK11 and MAPK14. Dephosphorylated by PP2A. As to expression, ubiquitously expressed in all tissues examined, with high levels in skeletal muscle and low levels in brain.

It localises to the cytoplasm. The protein resides in the nucleus. Its subcellular location is the PML body. The catalysed reaction is L-seryl-[protein] + ATP = O-phospho-L-seryl-[protein] + ADP + H(+). It carries out the reaction L-threonyl-[protein] + ATP = O-phospho-L-threonyl-[protein] + ADP + H(+). Inhibited by CGP57380 and staurosporine. Serine/threonine-protein kinase that phosphorylates SFPQ/PSF, HNRNPA1 and EIF4E. May play a role in the response to environmental stress and cytokines. Appears to regulate translation by phosphorylating EIF4E, thus increasing the affinity of this protein for the 7-methylguanosine-containing mRNA cap. Required for mediating PP2A-inhibition-induced EIF4E phosphorylation. Triggers EIF4E shuttling from cytoplasm to nucleus. Enhances the formation of EIF4F complex in pachytene spermatocytes, thus promoting mRNA translation during spermatogenesis. Displays a high basal kinase activity. Acts as a mediator of the suppressive effects of IFNgamma on hematopoiesis. Negative regulator for signals that control generation of arsenic trioxide As(2)O(3)-dependent apoptosis and anti-leukemic responses. Involved in anti-apoptotic signaling in response to serum withdrawal. This Mus musculus (Mouse) protein is MAP kinase-interacting serine/threonine-protein kinase 2 (Mknk2).